The chain runs to 242 residues: 1-(5-phosphoribosyl)-5-[(5-phosphoribosylamino)methylideneamino] imidazole-4-carboxamide isomerase (242 aa).

Asp-10 serves as the catalytic Proton acceptor. The active-site Proton donor is Asp-131.

The protein belongs to the HisA/HisF family.

The protein resides in the cytoplasm. It catalyses the reaction 1-(5-phospho-beta-D-ribosyl)-5-[(5-phospho-beta-D-ribosylamino)methylideneamino]imidazole-4-carboxamide = 5-[(5-phospho-1-deoxy-D-ribulos-1-ylimino)methylamino]-1-(5-phospho-beta-D-ribosyl)imidazole-4-carboxamide. It participates in amino-acid biosynthesis; L-histidine biosynthesis; L-histidine from 5-phospho-alpha-D-ribose 1-diphosphate: step 4/9. In Bifidobacterium animalis subsp. lactis (strain AD011), this protein is 1-(5-phosphoribosyl)-5-[(5-phosphoribosylamino)methylideneamino] imidazole-4-carboxamide isomerase.